The sequence spans 210 residues: Urease accessory protein UreF (210 aa).

This sequence belongs to the UreF family. In terms of assembly, ureD, UreF and UreG form a complex that acts as a GTP-hydrolysis-dependent molecular chaperone, activating the urease apoprotein by helping to assemble the nickel containing metallocenter of UreC. The UreE protein probably delivers the nickel.

It localises to the cytoplasm. Functionally, required for maturation of urease via the functional incorporation of the urease nickel metallocenter. The chain is Urease accessory protein UreF from Cereibacter sphaeroides (strain ATCC 17025 / ATH 2.4.3) (Rhodobacter sphaeroides).